A 241-amino-acid polypeptide reads, in one-letter code: NAD-dependent protein deacetylase 2 (241 aa).

Residues Met1–Gly241 form the Deacetylase sirtuin-type domain. Positions 13, 17, 25, 92, 94, 95, and 112 each coordinate NAD(+). The nicotinamide site is built by Val94 and Asp95. The active-site Proton acceptor is His112. Positions 120, 123, 145, and 148 each coordinate Zn(2+). Positions 186, 187, 211, and 229 each coordinate NAD(+).

This sequence belongs to the sirtuin family. Class U subfamily. It depends on Zn(2+) as a cofactor.

Its subcellular location is the cytoplasm. It catalyses the reaction N(6)-acetyl-L-lysyl-[protein] + NAD(+) + H2O = 2''-O-acetyl-ADP-D-ribose + nicotinamide + L-lysyl-[protein]. In terms of biological role, NAD-dependent protein deacetylase which modulates the activities of several enzymes which are inactive in their acetylated form. This chain is NAD-dependent protein deacetylase 2, found in Streptomyces coelicolor (strain ATCC BAA-471 / A3(2) / M145).